The primary structure comprises 585 residues: ATP-dependent lipid A-core flippase (585 aa).

6 helical membrane passes run 18 to 38 (LWPT…ALVL), 68 to 88 (LMAV…FISS), 142 to 162 (SNAL…LAVM), 163 to 183 (IATS…IAVL), 255 to 275 (PIVQ…ATIP), and 277 to 297 (IMSQ…MLAM). Residues 30-313 (IAAAAALVLN…LTNVNSQFQR (284 aa)) form the ABC transmembrane type-1 domain. An ABC transporter domain is found at 345 to 581 (VSFKDVSFTY…NGAYKQLHKM (237 aa)). An ATP-binding site is contributed by 379 to 386 (GRSGSGKS).

This sequence belongs to the ABC transporter superfamily. Lipid exporter (TC 3.A.1.106) family. In terms of assembly, homodimer.

The protein localises to the cell inner membrane. The catalysed reaction is ATP + H2O + lipid A-core oligosaccharideSide 1 = ADP + phosphate + lipid A-core oligosaccharideSide 2.. In terms of biological role, involved in lipopolysaccharide (LPS) biosynthesis. Translocates lipid A-core from the inner to the outer leaflet of the inner membrane. Transmembrane domains (TMD) form a pore in the inner membrane and the ATP-binding domain (NBD) is responsible for energy generation. The chain is ATP-dependent lipid A-core flippase from Mannheimia succiniciproducens (strain KCTC 0769BP / MBEL55E).